Reading from the N-terminus, the 423-residue chain is Mannose-6-phosphate isomerase (423 aa).

Residue alanine 2 is modified to N-acetylalanine. A phosphoserine mark is found at serine 102 and serine 108. Zn(2+)-binding residues include glutamine 110, histidine 112, glutamate 137, and histidine 276. Arginine 295 is a catalytic residue.

It belongs to the mannose-6-phosphate isomerase type 1 family. It depends on Zn(2+) as a cofactor.

The protein localises to the cytoplasm. It catalyses the reaction D-mannose 6-phosphate = D-fructose 6-phosphate. The protein operates within nucleotide-sugar biosynthesis; GDP-alpha-D-mannose biosynthesis; alpha-D-mannose 1-phosphate from D-fructose 6-phosphate: step 1/2. In terms of biological role, isomerase that catalyzes the interconversion of fructose-6-P and mannose-6-P and has a critical role in the supply of D-mannose derivatives required for many eukaryotic glycosylation reactions. The sequence is that of Mannose-6-phosphate isomerase (MPI) from Bos taurus (Bovine).